We begin with the raw amino-acid sequence, 359 residues long: Peptide chain release factor 1 (359 aa).

Position 236 is an N5-methylglutamine (Q236).

It belongs to the prokaryotic/mitochondrial release factor family. Post-translationally, methylated by PrmC. Methylation increases the termination efficiency of RF1.

The protein resides in the cytoplasm. In terms of biological role, peptide chain release factor 1 directs the termination of translation in response to the peptide chain termination codons UAG and UAA. This chain is Peptide chain release factor 1, found in Streptococcus pneumoniae serotype 4 (strain ATCC BAA-334 / TIGR4).